The following is a 61-amino-acid chain: Large ribosomal subunit protein uL30 (61 aa).

It belongs to the universal ribosomal protein uL30 family. Part of the 50S ribosomal subunit.

The chain is Large ribosomal subunit protein uL30 from Bifidobacterium adolescentis (strain ATCC 15703 / DSM 20083 / NCTC 11814 / E194a).